The primary structure comprises 330 residues: tRNA-modifying protein YgfZ (330 aa).

Residues tryptophan 28 and tryptophan 190 each contribute to the folate site.

Belongs to the tRNA-modifying YgfZ family.

It localises to the cytoplasm. Functionally, folate-binding protein involved in regulating the level of ATP-DnaA and in the modification of some tRNAs. It is probably a key factor in regulatory networks that act via tRNA modification, such as initiation of chromosomal replication. This chain is tRNA-modifying protein YgfZ, found in Serratia proteamaculans (strain 568).